The chain runs to 819 residues: DNA topoisomerase 4 subunit A (819 aa).

Residues 30-496 (LPDIRDGLKP…QIIEIDTASL (467 aa)) enclose the Topo IIA-type catalytic domain. Tyr-118 functions as the O-(5'-phospho-DNA)-tyrosine intermediate in the catalytic mechanism.

This sequence belongs to the type II topoisomerase GyrA/ParC subunit family. ParC type 2 subfamily. In terms of assembly, heterotetramer composed of ParC and ParE.

It localises to the cell membrane. The enzyme catalyses ATP-dependent breakage, passage and rejoining of double-stranded DNA.. Functionally, topoisomerase IV is essential for chromosome segregation. It relaxes supercoiled DNA. Performs the decatenation events required during the replication of a circular DNA molecule. The sequence is that of DNA topoisomerase 4 subunit A from Streptococcus pyogenes serotype M3 (strain ATCC BAA-595 / MGAS315).